The sequence spans 238 residues: Zinc finger protein ZAT6 (238 aa).

Polar residues predominate over residues 1–15 (MALETLTSPRLSSPM). The tract at residues 1-42 (MALETLTSPRLSSPMPTLFQDSALGFHGSKGKRSKRSRSEFD) is disordered. Positions 30-38 (KGKRSKRSR) match the Nuclear localization signal motif. C2H2-type zinc fingers lie at residues 89 to 111 (YKCSVCDKAFSSYQALGGHKASH) and 148 to 170 (HVCSICHKSFATGQALGGHKRCH). The segment at 175-202 (NGGGVSSSVSNSEDVGSTSHVSSGHRGF) is disordered. Positions 180–193 (SSSVSNSEDVGSTS) are enriched in low complexity.

The protein resides in the nucleus. Its function is as follows. Probable transcription factor that regulates root development and phosphate (Pi) acquisition and homeostasis. Probably acts as a repressor of primary root growth and regulates Pi homeostasis through the control of root architecture. The protein is Zinc finger protein ZAT6 (ZAT6) of Arabidopsis thaliana (Mouse-ear cress).